The sequence spans 288 residues: Acetyl-coenzyme A carboxylase carboxyl transferase subunit beta (288 aa).

In terms of domain architecture, CoA carboxyltransferase N-terminal spans 32–288; sequence LFAKCPACKH…LELHTEVENV (257 aa). Positions 36, 39, 54, and 57 each coordinate Zn(2+). The C4-type zinc finger occupies 36 to 57; that stretch reads CPACKHTIYQKDLGKNKVCPNC.

Belongs to the AccD/PCCB family. In terms of assembly, acetyl-CoA carboxylase is a heterohexamer composed of biotin carboxyl carrier protein (AccB), biotin carboxylase (AccC) and two subunits each of ACCase subunit alpha (AccA) and ACCase subunit beta (AccD). Zn(2+) is required as a cofactor.

It localises to the cytoplasm. The catalysed reaction is N(6)-carboxybiotinyl-L-lysyl-[protein] + acetyl-CoA = N(6)-biotinyl-L-lysyl-[protein] + malonyl-CoA. The protein operates within lipid metabolism; malonyl-CoA biosynthesis; malonyl-CoA from acetyl-CoA: step 1/1. Component of the acetyl coenzyme A carboxylase (ACC) complex. Biotin carboxylase (BC) catalyzes the carboxylation of biotin on its carrier protein (BCCP) and then the CO(2) group is transferred by the transcarboxylase to acetyl-CoA to form malonyl-CoA. The sequence is that of Acetyl-coenzyme A carboxylase carboxyl transferase subunit beta from Lactococcus lactis subsp. lactis (strain IL1403) (Streptococcus lactis).